Reading from the N-terminus, the 296-residue chain is tRNA (guanine-N(7)-)-methyltransferase (296 aa).

Positions 1–26 (MSKRTREESEMEAGPSTASPGVSVSP) are disordered. S-adenosyl-L-methionine-binding positions include Gly-101, 124-125 (EI), 168-169 (NS), and Leu-188. The active site involves Asp-191. An S-adenosyl-L-methionine-binding site is contributed by 266–268 (TEE).

This sequence belongs to the class I-like SAM-binding methyltransferase superfamily. TrmB family. In terms of assembly, forms a complex with TRM82.

It localises to the nucleus. The catalysed reaction is guanosine(46) in tRNA + S-adenosyl-L-methionine = N(7)-methylguanosine(46) in tRNA + S-adenosyl-L-homocysteine. It functions in the pathway tRNA modification; N(7)-methylguanine-tRNA biosynthesis. Functionally, catalyzes the formation of N(7)-methylguanine at position 46 (m7G46) in tRNA. This Cryptococcus neoformans var. neoformans serotype D (strain JEC21 / ATCC MYA-565) (Filobasidiella neoformans) protein is tRNA (guanine-N(7)-)-methyltransferase.